The following is a 358-amino-acid chain: G-protein coupled receptor 20 (358 aa).

Over 1 to 48 (MPSVSPAGPSAGAVPNATAVTTVRTNASGLEVPLFHLFARLDEELHGT) the chain is Extracellular. N-linked (GlcNAc...) asparagine glycosylation is found at N16 and N26. Residues 49-69 (FPGLWLALMAVHGAIFLAGLV) traverse the membrane as a helical segment. The Cytoplasmic portion of the chain corresponds to 70–86 (LNGLALYVFCCRTRAKT). The helical transmembrane segment at 87 to 107 (PSVIYTINLVVTDLLVGLSLP) threads the bilayer. Residues 108–125 (TRFAVYYGARGCLRCAFP) are Extracellular-facing. Residues 126–146 (HVLGYFLNMHCSILFLTCICV) form a helical membrane-spanning segment. Topologically, residues 147–168 (DRYLAIVRPEGSRRCRQPACAR) are cytoplasmic. A helical transmembrane segment spans residues 169–189 (AVCAFVWLAAGAVTLSVLGVT). At 190 to 196 (GSRPCCR) the chain is on the extracellular side. Residues 197-217 (VFALTVLEFLLPLLVISVFTG) traverse the membrane as a helical segment. Topologically, residues 218–238 (RIMCALSRPGLLHQGRQRRVR) are cytoplasmic. A helical transmembrane segment spans residues 239 to 259 (AMQLLLTVLIIFLVCFTPFHA). The Extracellular segment spans residues 260 to 275 (RQVAVALWPDMPHHTS). Residues 276-296 (LVVYHVAVTLSSLNSCMDPIV) form a helical membrane-spanning segment. The Cytoplasmic segment spans residues 297–358 (YCFVTSGFQA…TQALANGPEA (62 aa)). The segment at 315–339 (HGEREPSSGDVVSMHRSSKGSGRHH) is disordered. Over residues 330-339 (RSSKGSGRHH) the composition is skewed to basic residues.

Belongs to the G-protein coupled receptor 1 family. Ubiquitous with highest levels in intestinal tissues. In the brain detected in thalamus, putamen, and caudate, but not in frontal cortex, pons and hypothalamus.

Its subcellular location is the cell membrane. Its function is as follows. Orphan receptor with constitutive G(i) signaling activity that activate cyclic AMP. This Homo sapiens (Human) protein is G-protein coupled receptor 20 (GPR20).